A 341-amino-acid polypeptide reads, in one-letter code: Serpentine receptor class beta-1 (341 aa).

Transmembrane regions (helical) follow at residues 22-42 (AQFW…IFLL), 66-86 (FLFA…PLFI), 102-122 (GQLS…GFSI), 141-161 (LGPL…FTVF), 188-208 (CWIL…ILLV), 240-260 (LIVS…TIFI), and 279-299 (GVYI…IKAL).

It belongs to the nematode receptor-like protein srb family.

The protein localises to the membrane. The polypeptide is Serpentine receptor class beta-1 (srb-1) (Caenorhabditis elegans).